The primary structure comprises 727 residues: ABC transporter G family member STR2 (727 aa).

Residues 1 to 475 (MKTQGLELET…NFTNIRRTPE (475 aa)) are Cytoplasmic-facing. One can recognise an ABC transporter domain in the interval 25–275 (LEFESLTYTV…LNRMGRKIPK (251 aa)). Residue 69–76 (GPSGAGKS) coordinates ATP. A helical transmembrane segment spans residues 476-496 (LFLSRLMVLTFMGVMMATMFH). The Extracellular segment spans residues 497–510 (NPKNTLQGITNRLS). Residues 511–531 (FFIFTVCLFFFSSNDAVPAFI) traverse the membrane as a helical segment. Topologically, residues 532–559 (QERFIFIRETSHNAYRASCYTIASLITH) are cytoplasmic. A helical membrane pass occupies residues 560–580 (MPFLALQALAYAAIVWFALEL). Residues 581 to 583 (RGP) are Extracellular-facing. The helical transmembrane segment at 584–604 (FIYFFLVLFISLLSTNSFVVF) threads the bilayer. At 605–612 (VSSIVPNY) the chain is on the cytoplasmic side. A helical membrane pass occupies residues 613–633 (ILGYAAVIAFTALFFLFCGYF). At 634 to 699 (LSSEDIPLYW…GTEEIKKRNN (66 aa)) the chain is on the extracellular side. N-linked (GlcNAc...) asparagine glycosylation occurs at Asn667. Residues 700 to 720 (VLIMLGWAVLYRILFYIILRF) traverse the membrane as a helical segment. Over 721-727 (ASKNQRS) the chain is Cytoplasmic.

This sequence belongs to the ABC transporter superfamily. ABCG family. Stunted arbuscule (STR) subfamily. Heterodimerizes with STR; the resulting transporter is located in the peri-arbuscular membrane. In terms of tissue distribution, expressed constitutively in the vascular tissue of roots.

It is found in the cell membrane. Its function is as follows. Together with STR, required for arbuscule development in arbuscular mycorrhizal symbiosis. The polypeptide is ABC transporter G family member STR2 (Medicago truncatula (Barrel medic)).